The following is a 520-amino-acid chain: GMP synthase [glutamine-hydrolyzing] (520 aa).

A Glutamine amidotransferase type-1 domain is found at 9–202; the sequence is SVLIVDFGSQ…IHNVAGIKGD (194 aa). Catalysis depends on Cys-86, which acts as the Nucleophile. Residues His-176 and Glu-178 contribute to the active site. One can recognise a GMPS ATP-PPase domain in the interval 203 to 395; it reads WSMSAYRQKA…LGLPDSFIGR (193 aa). Residue 230–236 coordinates ATP; it reads SGGVDSS.

Homodimer.

The catalysed reaction is XMP + L-glutamine + ATP + H2O = GMP + L-glutamate + AMP + diphosphate + 2 H(+). The protein operates within purine metabolism; GMP biosynthesis; GMP from XMP (L-Gln route): step 1/1. In terms of biological role, catalyzes the synthesis of GMP from XMP. This is GMP synthase [glutamine-hydrolyzing] from Rhizobium etli (strain ATCC 51251 / DSM 11541 / JCM 21823 / NBRC 15573 / CFN 42).